The primary structure comprises 275 residues: Putative phosphoenolpyruvate synthase regulatory protein (275 aa).

157-164 (GVSRCGKT) serves as a coordination point for ADP.

It belongs to the pyruvate, phosphate/water dikinase regulatory protein family. PSRP subfamily.

The catalysed reaction is [pyruvate, water dikinase] + ADP = [pyruvate, water dikinase]-phosphate + AMP + H(+). It catalyses the reaction [pyruvate, water dikinase]-phosphate + phosphate + H(+) = [pyruvate, water dikinase] + diphosphate. Functionally, bifunctional serine/threonine kinase and phosphorylase involved in the regulation of the phosphoenolpyruvate synthase (PEPS) by catalyzing its phosphorylation/dephosphorylation. The polypeptide is Putative phosphoenolpyruvate synthase regulatory protein (Bordetella pertussis (strain Tohama I / ATCC BAA-589 / NCTC 13251)).